We begin with the raw amino-acid sequence, 156 residues long: S-ribosylhomocysteine lyase (156 aa).

Residues His54, His58, and Cys126 each contribute to the Fe cation site.

The protein belongs to the LuxS family. As to quaternary structure, homodimer. The cofactor is Fe cation.

It catalyses the reaction S-(5-deoxy-D-ribos-5-yl)-L-homocysteine = (S)-4,5-dihydroxypentane-2,3-dione + L-homocysteine. In terms of biological role, involved in the synthesis of autoinducer 2 (AI-2) which is secreted by bacteria and is used to communicate both the cell density and the metabolic potential of the environment. The regulation of gene expression in response to changes in cell density is called quorum sensing. Catalyzes the transformation of S-ribosylhomocysteine (RHC) to homocysteine (HC) and 4,5-dihydroxy-2,3-pentadione (DPD). In Shouchella clausii (strain KSM-K16) (Alkalihalobacillus clausii), this protein is S-ribosylhomocysteine lyase.